Here is a 258-residue protein sequence, read N- to C-terminus: Aspartate/glutamate leucyltransferase (258 aa).

This sequence belongs to the R-transferase family. Bpt subfamily.

The protein resides in the cytoplasm. The enzyme catalyses N-terminal L-glutamyl-[protein] + L-leucyl-tRNA(Leu) = N-terminal L-leucyl-L-glutamyl-[protein] + tRNA(Leu) + H(+). It catalyses the reaction N-terminal L-aspartyl-[protein] + L-leucyl-tRNA(Leu) = N-terminal L-leucyl-L-aspartyl-[protein] + tRNA(Leu) + H(+). Its function is as follows. Functions in the N-end rule pathway of protein degradation where it conjugates Leu from its aminoacyl-tRNA to the N-termini of proteins containing an N-terminal aspartate or glutamate. The protein is Aspartate/glutamate leucyltransferase of Bradyrhizobium sp. (strain ORS 278).